A 112-amino-acid polypeptide reads, in one-letter code: Cell cycle protein GpsB (112 aa).

The stretch at 38-72 (IKDYEAFHKEFEQLKQQNARLKRELEEQKLAATQV) forms a coiled coil.

The protein belongs to the GpsB family. As to quaternary structure, forms polymers through the coiled coil domains. Interacts with PBP1, MreC and EzrA.

It is found in the cytoplasm. Its function is as follows. Divisome component that associates with the complex late in its assembly, after the Z-ring is formed, and is dependent on DivIC and PBP2B for its recruitment to the divisome. Together with EzrA, is a key component of the system that regulates PBP1 localization during cell cycle progression. Its main role could be the removal of PBP1 from the cell pole after pole maturation is completed. Also contributes to the recruitment of PBP1 to the division complex. Not essential for septum formation. This is Cell cycle protein GpsB from Bacillus anthracis (strain A0248).